Consider the following 338-residue polypeptide: Bacteriochlorophyllide d C-20 methyltransferase (338 aa).

Position 147 (glutamate 147) interacts with S-adenosyl-L-methionine. A substrate-binding site is contributed by histidine 150. Residues glycine 177, asparagine 200, 227 to 228 (DI), and 242 to 243 (CR) each bind S-adenosyl-L-methionine. The active-site Nucleophile is tyrosine 246. Histidine 290 serves as a coordination point for a bacteriochlorophyll d.

This sequence belongs to the class I-like SAM-binding methyltransferase superfamily. Cation-independent O-methyltransferase family. In terms of assembly, homodimer.

The catalysed reaction is a bacteriochlorophyllide d + S-adenosyl-L-methionine = a bacteriochlorophyllide c + S-adenosyl-L-homocysteine + H(+). It participates in porphyrin-containing compound metabolism; bacteriochlorophyll biosynthesis (light-independent). Functionally, involved in the biosynthesis of the major light-harvesting pigment bacteriochlorophyll c (BChlc), which confers a significant competitive advantage to green sulfur bacteria living at limiting red and near-infrared light intensities. Catalyzes the methylation at the C-20 position of the cyclic tetrapyrrole chlorin of bacteriochlorophyll d (BChld) to produce bacteriochlorophyll c (BChlc) using S-adenosylmethionine (SAM) as a methyl source. In Chlorobaculum tepidum (strain ATCC 49652 / DSM 12025 / NBRC 103806 / TLS) (Chlorobium tepidum), this protein is Bacteriochlorophyllide d C-20 methyltransferase.